We begin with the raw amino-acid sequence, 423 residues long: Serine--tRNA ligase (423 aa).

2 stretches are compositionally biased toward basic and acidic residues: residues 1 to 24 and 62 to 71; these read MIDL…RGED and KMRDASPEEK. The disordered stretch occupies residues 1 to 71; the sequence is MIDLKQLRDD…KMRDASPEEK (71 aa). Position 230–232 (230–232) interacts with L-serine; the sequence is TSE. ATP is bound by residues 261 to 263 and V277; that span reads RRE. E284 lines the L-serine pocket. 348 to 351 serves as a coordination point for ATP; that stretch reads ELTS. T383 is an L-serine binding site.

Belongs to the class-II aminoacyl-tRNA synthetase family. Type-1 seryl-tRNA synthetase subfamily. In terms of assembly, homodimer. The tRNA molecule binds across the dimer.

The protein localises to the cytoplasm. The enzyme catalyses tRNA(Ser) + L-serine + ATP = L-seryl-tRNA(Ser) + AMP + diphosphate + H(+). It carries out the reaction tRNA(Sec) + L-serine + ATP = L-seryl-tRNA(Sec) + AMP + diphosphate + H(+). It participates in aminoacyl-tRNA biosynthesis; selenocysteinyl-tRNA(Sec) biosynthesis; L-seryl-tRNA(Sec) from L-serine and tRNA(Sec): step 1/1. Catalyzes the attachment of serine to tRNA(Ser). Is also able to aminoacylate tRNA(Sec) with serine, to form the misacylated tRNA L-seryl-tRNA(Sec), which will be further converted into selenocysteinyl-tRNA(Sec). This is Serine--tRNA ligase from Corynebacterium kroppenstedtii (strain DSM 44385 / JCM 11950 / CIP 105744 / CCUG 35717).